The sequence spans 825 residues: MVFERTLIDLIKGIRSHANDEEAFIATCLLECRKEATSQDADLKSEAILKLAYLEMLGVDISWASFQIVEVMSSSKILQKQKGYLAAVQSFKPDTDVLMLTTNLLKKDLMSSKVPEITLAIDGLSHFSTLGLARDLYRDVLILLNHSVPYVRKRTILLLYRLCLQYPEAISACIPKLRERLDDPDTSVVNAAVSVICELARRAPKNYLEFAPDLFHLLTTSSNNWMLIKLIKLFASLTPYEPRLVKKLIPSLTDIIENTHAMSLLYECINTIVSGNMLVGHSQCDKLASLCASKLRGFFEDTDQNLKYIALLCLRKLANTHPSLVSAQLDIILKCLVDTDTSIRLRALDLVNEIVNKENIRTIVKTLMLQLIVSSDESAVEDIRNSTATRIIEMTSKSTYMNIADFEWLLTVYVDLANIPGIDTGTLLNNQIIDLCVRVKALRPFSVDIFSQAILDPSYVSTTDCSVSEKRTDILPAIIWCLGEYAEFIEEYLDILDALTRPSFKKCSNLAHRLLLQAITKIFCQWCLEEEPTWGVEKFGLVKLWVEKIVSFIEQFLNFQDMEIQRRASEFYILFNQVSDIVNTSDTMEVLELQKKPPYIVQNTMYKLFFGEPLNPVAVKAQRKVMPDENLDLNCPINGVIEVPKELLENIIQSDDSLINFDTEVPSSGIDTFSKKQFNSLESVPVQRDLSSPFYLSSNQHTTTTNSEPENLNVETSMSDEAFNADKVTKVTKNKRRRKIFTSPSLQAMVVAQDEVPEGISLADIENKENPSNSNVYSLISLDPPLSTNQGSMGDIVLETKSPIRVEKKKSKKKKKKKEKTSGKE.

HEAT repeat units lie at residues 131-168 (GLAR…QYPE), 169-205 (AISA…RAPK), 207-243 (YLEF…YEPR), 244-281 (LVKK…LVGH), 285-323 (DKLA…THPS), 324-360 (LVSA…KENI), 363-400 (IVKT…KSTY), 469-513 (EKRT…LAHR), 515-547 (LLQA…LWVE), and 548-584 (KIVS…IVNT). The segment at 787–825 (STNQGSMGDIVLETKSPIRVEKKKSKKKKKKKEKTSGKE) is disordered. Basic residues predominate over residues 807–819 (EKKKSKKKKKKKE).

The protein belongs to the adaptor complexes large subunit family. Adaptor protein complex 3 (AP-3) is a heterotetramer composed of 2 large adaptins (apl5 and apl6), a medium adaptin (apm3) and a small adaptin (aps3).

It localises to the golgi apparatus. The protein resides in the cytoplasmic vesicle. The protein localises to the clathrin-coated vesicle membrane. Functionally, part of the AP-3 complex, an adaptor-related complex which is not clathrin-associated. The complex is associated with the Golgi region as well as more peripheral structures. It facilitates the budding of vesicles from the Golgi membrane and may be directly involved in trafficking to the vacuole. This chain is AP-3 complex subunit delta (apl5), found in Schizosaccharomyces pombe (strain 972 / ATCC 24843) (Fission yeast).